Reading from the N-terminus, the 560-residue chain is General negative regulator of transcription subunit 5 (560 aa).

3 coiled-coil regions span residues 3–26, 37–71, and 124–177; these read QRKL…DFDD, SNSS…SKED, and KRDQ…NEMD. The tract at residues 212–330 is disordered; sequence CEIQPSSSNN…DSEQQLNFPP (119 aa). The segment covering 215 to 237 has biased composition (polar residues); sequence QPSSSNNEAPKEGNNQTSLSSIR. Low complexity predominate over residues 273–288; sequence SQSISSTPTPVSTDTP. A compositionally biased stretch (polar residues) spans 299-311; it reads FDNSTLGTPTTHV. At Thr306 the chain carries Phosphothreonine. Lys338 participates in a covalent cross-link: Glycyl lysine isopeptide (Lys-Gly) (interchain with G-Cter in ubiquitin). Residue Ser377 is modified to Phosphoserine.

The protein belongs to the CNOT2/3/5 family. As to quaternary structure, forms a NOT protein complex that comprises NOT1, NOT2, NOT3, NOT4 and NOT5. Subunit of the 1.0 MDa CCR4-NOT core complex that contains CCR4, CAF1, NOT1, NOT2, NOT3, NOT4, NOT5, CAF40 and CAF130. In the complex interacts with NOT1 and NOT2. The core complex probably is part of a less characterized 1.9 MDa CCR4-NOT complex.

The protein resides in the cytoplasm. Its subcellular location is the nucleus. Its function is as follows. Acts as a component of the CCR4-NOT core complex, which in the nucleus seems to be a general transcription factor, and in the cytoplasm the major mRNA deadenylase involved in mRNA turnover. The NOT protein subcomplex negatively regulates the basal and activated transcription of many genes. Preferentially affects TC-type TATA element-dependent transcription. Could directly or indirectly inhibit component(s) of the general transcription machinery. In Saccharomyces cerevisiae (strain ATCC 204508 / S288c) (Baker's yeast), this protein is General negative regulator of transcription subunit 5 (NOT5).